We begin with the raw amino-acid sequence, 179 residues long: Adenylyl-sulfate kinase (179 aa).

13–20 lines the ATP pocket; it reads GLSGAGKS. Ser87 functions as the Phosphoserine intermediate in the catalytic mechanism.

Belongs to the APS kinase family.

The catalysed reaction is adenosine 5'-phosphosulfate + ATP = 3'-phosphoadenylyl sulfate + ADP + H(+). The protein operates within sulfur metabolism; hydrogen sulfide biosynthesis; sulfite from sulfate: step 2/3. Its function is as follows. Catalyzes the synthesis of activated sulfate. This Paraburkholderia xenovorans (strain LB400) protein is Adenylyl-sulfate kinase.